The chain runs to 142 residues: Regulatory protein RecX (142 aa).

It belongs to the RecX family.

The protein localises to the cytoplasm. Its function is as follows. Modulates RecA activity. The protein is Regulatory protein RecX of Thermus thermophilus (strain ATCC BAA-163 / DSM 7039 / HB27).